The primary structure comprises 311 residues: Manganese-dependent inorganic pyrophosphatase (311 aa).

Residues histidine 10, aspartate 14, aspartate 16, aspartate 75, histidine 97, and aspartate 149 each coordinate Mn(2+).

The protein belongs to the PPase class C family. As to quaternary structure, homodimer. The cofactor is Mn(2+).

The enzyme catalyses diphosphate + H2O = 2 phosphate + H(+). In Methanothrix thermoacetophila (strain DSM 6194 / JCM 14653 / NBRC 101360 / PT) (Methanosaeta thermophila), this protein is Manganese-dependent inorganic pyrophosphatase (ppaC).